The primary structure comprises 353 residues: S-adenosylmethionine:tRNA ribosyltransferase-isomerase (353 aa).

This sequence belongs to the QueA family. As to quaternary structure, monomer.

The protein localises to the cytoplasm. The catalysed reaction is 7-aminomethyl-7-carbaguanosine(34) in tRNA + S-adenosyl-L-methionine = epoxyqueuosine(34) in tRNA + adenine + L-methionine + 2 H(+). It functions in the pathway tRNA modification; tRNA-queuosine biosynthesis. In terms of biological role, transfers and isomerizes the ribose moiety from AdoMet to the 7-aminomethyl group of 7-deazaguanine (preQ1-tRNA) to give epoxyqueuosine (oQ-tRNA). The polypeptide is S-adenosylmethionine:tRNA ribosyltransferase-isomerase (Marinomonas sp. (strain MWYL1)).